The chain runs to 397 residues: Acetate kinase (397 aa).

Asparagine 8 is a Mg(2+) binding site. Lysine 15 provides a ligand contact to ATP. Residue arginine 92 coordinates substrate. Aspartate 149 (proton donor/acceptor) is an active-site residue. ATP is bound by residues 209 to 213 (HLGNG), 283 to 285 (DFR), and 331 to 335 (GVGEN). Glutamate 385 is a Mg(2+) binding site.

It belongs to the acetokinase family. In terms of assembly, homodimer. The cofactor is Mg(2+). Requires Mn(2+) as cofactor.

It is found in the cytoplasm. The enzyme catalyses acetate + ATP = acetyl phosphate + ADP. It participates in metabolic intermediate biosynthesis; acetyl-CoA biosynthesis; acetyl-CoA from acetate: step 1/2. Catalyzes the formation of acetyl phosphate from acetate and ATP. Can also catalyze the reverse reaction. The protein is Acetate kinase of Corynebacterium glutamicum (strain ATCC 13032 / DSM 20300 / JCM 1318 / BCRC 11384 / CCUG 27702 / LMG 3730 / NBRC 12168 / NCIMB 10025 / NRRL B-2784 / 534).